The following is a 358-amino-acid chain: Peptide chain release factor 1 (358 aa).

The residue at position 235 (glutamine 235) is an N5-methylglutamine.

This sequence belongs to the prokaryotic/mitochondrial release factor family. Methylated by PrmC. Methylation increases the termination efficiency of RF1.

The protein resides in the cytoplasm. Functionally, peptide chain release factor 1 directs the termination of translation in response to the peptide chain termination codons UAG and UAA. This Nitrosospira multiformis (strain ATCC 25196 / NCIMB 11849 / C 71) protein is Peptide chain release factor 1.